Here is a 430-residue protein sequence, read N- to C-terminus: NEDD8-activating enzyme E1 catalytic subunit (430 aa).

52-76 (GLGCELLKNLALSGFRTIEVIDMDT) contributes to the ATP binding site. Cys211 (glycyl thioester intermediate) is an active-site residue.

Belongs to the ubiquitin-activating E1 family. UBA3 subfamily. Heterodimer of uba-3 and ula-1. Interacts with NEDD8 and ubc-12. As to expression, expressed in intestine, vulva epithelium and head and tail neurons.

The protein resides in the nucleus. Its subcellular location is the cytoplasm. It carries out the reaction ATP + [NEDD8 protein] + [E1 NEDD8-activating enzyme]-L-cysteine = AMP + diphosphate + [E1 NEDD8-activating enzyme]-S-[NEDD8 protein]-yl-L-cysteine.. It functions in the pathway protein modification; protein neddylation. In terms of biological role, catalytic subunit of the dimeric rfl-1 (uba-3)-ula-1 E1 enzyme. E1 activates NEDD8 by first adenylating its C-terminal glycine residue with ATP, thereafter linking this residue to the side chain of the catalytic cysteine, yielding a NEDD8-uba-3 thioester and free AMP. E1 finally transfers NEDD8 to the catalytic cysteine of ubc-12. Required for cytokinesis and mitotic spindle orientation during early embryogenesis. The polypeptide is NEDD8-activating enzyme E1 catalytic subunit (Caenorhabditis elegans).